We begin with the raw amino-acid sequence, 557 residues long: Formate--tetrahydrofolate ligase 1 (557 aa).

Residue 66–73 participates in ATP binding; the sequence is TPAGEGKT.

The protein belongs to the formate--tetrahydrofolate ligase family.

It carries out the reaction (6S)-5,6,7,8-tetrahydrofolate + formate + ATP = (6R)-10-formyltetrahydrofolate + ADP + phosphate. It participates in one-carbon metabolism; tetrahydrofolate interconversion. In Streptococcus sanguinis (strain SK36), this protein is Formate--tetrahydrofolate ligase 1.